The chain runs to 222 residues: Charged multivesicular body protein 3 (222 aa).

The N-myristoyl glycine moiety is linked to residue glycine 2. The interval 2–113 (GLFGKTQEKP…LQKSTEVMKA (112 aa)) is intramolecular interaction with C-terminus. Residues 22–54 (KIRKEMRVVDRQIRDIQREEEKVKRSVKDAAKK) adopt a coiled-coil conformation. Important for autoinhibitory function stretches follow at residues 59 to 64 (VCIVLA) and 168 to 169 (IL). A coiled-coil region spans residues 141–222 (EEMLEDTFES…MQSRLATLRS (82 aa)). The tract at residues 151–220 (MDDQEEMEEE…EAMQSRLATL (70 aa)) is intramolecular interaction with N-terminus. The tract at residues 151–222 (MDDQEEMEEE…MQSRLATLRS (72 aa)) is interaction with VPS4A. Lysine 179 is covalently cross-linked (Glycyl lysine isopeptide (Lys-Gly) (interchain with G-Cter in ubiquitin)). The disordered stretch occupies residues 180–222 (APSKVTDALPEPEPPGAMAASEDEEEEEEALEAMQSRLATLRS). Serine 200 bears the Phosphoserine mark. Over residues 200 to 210 (SEDEEEEEEAL) the composition is skewed to acidic residues. Residues 201–211 (EDEEEEEEALE) carry the MIT-interacting motif motif. 2 interaction with STAMBP regions span residues 203–207 (EEEEE) and 221–222 (RS).

This sequence belongs to the SNF7 family. Probable core component of the endosomal sorting required for transport complex III (ESCRT-III). ESCRT-III components are thought to multimerize to form a flat lattice on the perimeter membrane of the endosome. Several assembly forms of ESCRT-III may exist that interact and act sequentially. Forms a metastable monomer in solution; its core structure (without part of the putative autoinhibitory C-terminal acidic region) oligomerizes into a flat lattice via two different dimerization interfaces. In vitro, heteromerizes with CHMP2A (but not CHMP4) to form helical tubular structures that expose membrane-interacting sites on the outside whereas VPS4B can associate on the inside of the tubule. May interact with IGFBP7; the relevance of such interaction however remains unclear. Interacts with CHMP2A. Interacts with CHMP4A; the interaction requires the release of CHMP4A autoinhibition. Interacts with VPS4A. Interacts with STAMBP; the interaction appears to relieve the autoinhibition of CHMP3. Interacts with VTA1. As to expression, widely expressed. Expressed in heart, brain, placenta, lung, liver, skeletal muscle, kidney and pancreas.

The protein localises to the cytoplasm. Its subcellular location is the cytosol. It is found in the membrane. The protein resides in the endosome. It localises to the late endosome membrane. Functionally, probable core component of the endosomal sorting required for transport complex III (ESCRT-III) which is involved in multivesicular bodies (MVBs) formation and sorting of endosomal cargo proteins into MVBs. MVBs contain intraluminal vesicles (ILVs) that are generated by invagination and scission from the limiting membrane of the endosome and mostly are delivered to lysosomes enabling degradation of membrane proteins, such as stimulated growth factor receptors, lysosomal enzymes and lipids. The MVB pathway appears to require the sequential function of ESCRT-O, -I,-II and -III complexes. ESCRT-III proteins mostly dissociate from the invaginating membrane before the ILV is released. The ESCRT machinery also functions in topologically equivalent membrane fission events, such as the terminal stages of cytokinesis and the budding of enveloped viruses (HIV-1 and other lentiviruses). ESCRT-III proteins are believed to mediate the necessary vesicle extrusion and/or membrane fission activities, possibly in conjunction with the AAA ATPase VPS4. Selectively binds to phosphatidylinositol 3,5-bisphosphate PtdIns(3,5)P2 and PtdIns(3,4)P2 in preference to other phosphoinositides tested. Involved in late stages of cytokinesis. Plays a role in endosomal sorting/trafficking of EGF receptor. Isoform 2 prevents stress-mediated cell death and accumulation of reactive oxygen species when expressed in yeast cells. This Homo sapiens (Human) protein is Charged multivesicular body protein 3 (CHMP3).